The primary structure comprises 254 residues: MNIFSFYIINNDAPEPWQICYQDSATKIMSGIDKLTGEIFYYETLLLIIVGWVLISAIIKYTKTELSYKYFNHGTLIEILWTCSPAFILIAISFPSFKLLYLMDSIIDSQITIKVLGHQWYWSYEYSDYLDNSGDSISFDSIMIPTDDLEPGQFRLLEVDNRIVLPIHTHIRFICTSSDVIHSFAVPSLGLKIDALPGRLNGISTYVEREGTFYGQCSELCGVYHFGMPIVIEAVRIEKYLEWLNIHLDNTPSS.

The Mitochondrial intermembrane portion of the chain corresponds to 12–38; sequence DAPEPWQICYQDSATKIMSGIDKLTGE. The helical transmembrane segment at 39 to 59 threads the bilayer; that stretch reads IFYYETLLLIIVGWVLISAII. The Mitochondrial matrix segment spans residues 60 to 73; that stretch reads KYTKTELSYKYFNH. Residues 74-94 traverse the membrane as a helical segment; it reads GTLIEILWTCSPAFILIAISF. At 95-248 the chain is on the mitochondrial intermembrane side; the sequence is PSFKLLYLMD…KYLEWLNIHL (154 aa). Cu cation contacts are provided by His-182, Cys-217, Glu-219, Cys-221, His-225, and Met-228. Position 219 (Glu-219) interacts with Mg(2+).

The protein belongs to the cytochrome c oxidase subunit 2 family. As to quaternary structure, component of the cytochrome c oxidase (complex IV, CIV), a multisubunit enzyme composed of a catalytic core of 3 subunits and several supernumerary subunits. The complex exists as a monomer or a dimer and forms supercomplexes (SCs) in the inner mitochondrial membrane with ubiquinol-cytochrome c oxidoreductase (cytochrome b-c1 complex, complex III, CIII). Cu cation serves as cofactor.

It is found in the mitochondrion inner membrane. The catalysed reaction is 4 Fe(II)-[cytochrome c] + O2 + 8 H(+)(in) = 4 Fe(III)-[cytochrome c] + 2 H2O + 4 H(+)(out). Functionally, component of the cytochrome c oxidase, the last enzyme in the mitochondrial electron transport chain which drives oxidative phosphorylation. The respiratory chain contains 3 multisubunit complexes succinate dehydrogenase (complex II, CII), ubiquinol-cytochrome c oxidoreductase (cytochrome b-c1 complex, complex III, CIII) and cytochrome c oxidase (complex IV, CIV), that cooperate to transfer electrons derived from NADH and succinate to molecular oxygen, creating an electrochemical gradient over the inner membrane that drives transmembrane transport and the ATP synthase. Cytochrome c oxidase is the component of the respiratory chain that catalyzes the reduction of oxygen to water. Electrons originating from reduced cytochrome c in the intermembrane space (IMS) are transferred via the dinuclear copper A center (CU(A)) of subunit 2 and heme A of subunit 1 to the active site in subunit 1, a binuclear center (BNC) formed by heme A3 and copper B (CU(B)). The BNC reduces molecular oxygen to 2 water molecules using 4 electrons from cytochrome c in the IMS and 4 protons from the mitochondrial matrix. The chain is Cytochrome c oxidase subunit 2 from Zancudomyces culisetae (Gut fungus).